A 370-amino-acid polypeptide reads, in one-letter code: Phosphoserine aminotransferase (370 aa).

R38 provides a ligand contact to L-glutamate. W101, T143, D166, and Q189 together coordinate pyridoxal 5'-phosphate. At K190 the chain carries N6-(pyridoxal phosphate)lysine. 243–244 (NT) lines the pyridoxal 5'-phosphate pocket.

Belongs to the class-V pyridoxal-phosphate-dependent aminotransferase family. SerC subfamily. In terms of assembly, homodimer. The cofactor is pyridoxal 5'-phosphate.

It is found in the cytoplasm. The catalysed reaction is O-phospho-L-serine + 2-oxoglutarate = 3-phosphooxypyruvate + L-glutamate. It catalyses the reaction 4-(phosphooxy)-L-threonine + 2-oxoglutarate = (R)-3-hydroxy-2-oxo-4-phosphooxybutanoate + L-glutamate. Its pathway is amino-acid biosynthesis; L-serine biosynthesis; L-serine from 3-phospho-D-glycerate: step 2/3. It functions in the pathway cofactor biosynthesis; pyridoxine 5'-phosphate biosynthesis; pyridoxine 5'-phosphate from D-erythrose 4-phosphate: step 3/5. Functionally, catalyzes the reversible conversion of 3-phosphohydroxypyruvate to phosphoserine and of 3-hydroxy-2-oxo-4-phosphonooxybutanoate to phosphohydroxythreonine. This chain is Phosphoserine aminotransferase, found in Methanosarcina mazei (strain ATCC BAA-159 / DSM 3647 / Goe1 / Go1 / JCM 11833 / OCM 88) (Methanosarcina frisia).